Reading from the N-terminus, the 113-residue chain is Iron-sulfur cluster insertion protein ErpA (113 aa).

Iron-sulfur cluster contacts are provided by Cys41, Cys105, and Cys107.

It belongs to the HesB/IscA family. As to quaternary structure, homodimer. Requires iron-sulfur cluster as cofactor.

Its function is as follows. Required for insertion of 4Fe-4S clusters for at least IspG. This chain is Iron-sulfur cluster insertion protein ErpA, found in Actinobacillus succinogenes (strain ATCC 55618 / DSM 22257 / CCUG 43843 / 130Z).